Consider the following 287-residue polypeptide: ATP synthase gamma chain (287 aa).

It belongs to the ATPase gamma chain family. F-type ATPases have 2 components, CF(1) - the catalytic core - and CF(0) - the membrane proton channel. CF(1) has five subunits: alpha(3), beta(3), gamma(1), delta(1), epsilon(1). CF(0) has three main subunits: a, b and c.

The protein localises to the cell membrane. Functionally, produces ATP from ADP in the presence of a proton gradient across the membrane. The gamma chain is believed to be important in regulating ATPase activity and the flow of protons through the CF(0) complex. The polypeptide is ATP synthase gamma chain (Geobacillus stearothermophilus (Bacillus stearothermophilus)).